Reading from the N-terminus, the 344-residue chain is N-acetyl-gamma-glutamyl-phosphate reductase (344 aa).

Cysteine 149 is a catalytic residue.

It belongs to the NAGSA dehydrogenase family. Type 1 subfamily.

It localises to the cytoplasm. It carries out the reaction N-acetyl-L-glutamate 5-semialdehyde + phosphate + NADP(+) = N-acetyl-L-glutamyl 5-phosphate + NADPH + H(+). Its pathway is amino-acid biosynthesis; L-arginine biosynthesis; N(2)-acetyl-L-ornithine from L-glutamate: step 3/4. In terms of biological role, catalyzes the NADPH-dependent reduction of N-acetyl-5-glutamyl phosphate to yield N-acetyl-L-glutamate 5-semialdehyde. The chain is N-acetyl-gamma-glutamyl-phosphate reductase from Thermoanaerobacter pseudethanolicus (strain ATCC 33223 / 39E) (Clostridium thermohydrosulfuricum).